Reading from the N-terminus, the 570-residue chain is Methionine--tRNA ligase (570 aa).

A 'HIGH' region motif is present at residues P11–N21. Residues C143, C146, C156, and C159 each contribute to the Zn(2+) site. Residues K333–S337 carry the 'KMSKS' region motif. Residue K336 coordinates ATP.

Belongs to the class-I aminoacyl-tRNA synthetase family. MetG type 1 subfamily. Zn(2+) serves as cofactor.

It is found in the cytoplasm. It carries out the reaction tRNA(Met) + L-methionine + ATP = L-methionyl-tRNA(Met) + AMP + diphosphate. In terms of biological role, is required not only for elongation of protein synthesis but also for the initiation of all mRNA translation through initiator tRNA(fMet) aminoacylation. This Pyrobaculum aerophilum (strain ATCC 51768 / DSM 7523 / JCM 9630 / CIP 104966 / NBRC 100827 / IM2) protein is Methionine--tRNA ligase.